The following is a 460-amino-acid chain: Ribosomal protein uS12 methylthiotransferase RimO (460 aa).

The region spanning 9-119 (PKVGFVSLGC…VMEAVHAALP (111 aa)) is the MTTase N-terminal domain. 6 residues coordinate [4Fe-4S] cluster: cysteine 18, cysteine 54, cysteine 83, cysteine 150, cysteine 154, and cysteine 157. The 239-residue stretch at 136-374 (LTPRHYAYLK…AKQAEISALR (239 aa)) folds into the Radical SAM core domain. The TRAM domain occupies 376–444 (EAKIGSVQQC…EHDLFGDALP (69 aa)).

Belongs to the methylthiotransferase family. RimO subfamily. The cofactor is [4Fe-4S] cluster.

Its subcellular location is the cytoplasm. The catalysed reaction is L-aspartate(89)-[ribosomal protein uS12]-hydrogen + (sulfur carrier)-SH + AH2 + 2 S-adenosyl-L-methionine = 3-methylsulfanyl-L-aspartate(89)-[ribosomal protein uS12]-hydrogen + (sulfur carrier)-H + 5'-deoxyadenosine + L-methionine + A + S-adenosyl-L-homocysteine + 2 H(+). In terms of biological role, catalyzes the methylthiolation of an aspartic acid residue of ribosomal protein uS12. This Xanthomonas oryzae pv. oryzae (strain PXO99A) protein is Ribosomal protein uS12 methylthiotransferase RimO.